We begin with the raw amino-acid sequence, 341 residues long: L-threonine 3-dehydrogenase (341 aa).

Zn(2+) is bound at residue Cys-38. Residues Thr-40 and His-43 each act as charge relay system in the active site. The Zn(2+) site is built by His-63, Glu-64, Cys-93, Cys-96, Cys-99, and Cys-107. NAD(+) contacts are provided by residues Ile-175, Asp-195, Arg-200, 262-264, and 286-287; these read LGI and IY.

This sequence belongs to the zinc-containing alcohol dehydrogenase family. As to quaternary structure, homotetramer. Zn(2+) is required as a cofactor.

The protein resides in the cytoplasm. The catalysed reaction is L-threonine + NAD(+) = (2S)-2-amino-3-oxobutanoate + NADH + H(+). Its pathway is amino-acid degradation; L-threonine degradation via oxydo-reductase pathway; glycine from L-threonine: step 1/2. In terms of biological role, catalyzes the NAD(+)-dependent oxidation of L-threonine to 2-amino-3-ketobutyrate. The chain is L-threonine 3-dehydrogenase from Escherichia coli O17:K52:H18 (strain UMN026 / ExPEC).